The sequence spans 147 residues: Small ribosomal subunit protein bS18 (147 aa).

This sequence belongs to the bacterial ribosomal protein bS18 family. As to quaternary structure, part of the 30S ribosomal subunit. Forms a tight heterodimer with protein bS6.

Its function is as follows. Binds as a heterodimer with protein bS6 to the central domain of the 16S rRNA, where it helps stabilize the platform of the 30S subunit. The protein is Small ribosomal subunit protein bS18 of Dehalococcoides mccartyi (strain ATCC BAA-2100 / JCM 16839 / KCTC 5957 / BAV1).